A 273-amino-acid polypeptide reads, in one-letter code: ABC transporter glutamine-binding protein GlnH (273 aa).

The first 20 residues, 1 to 20, serve as a signal peptide directing secretion; the sequence is MKKIFSLALISLFAVILLAA. Residue C21 is the site of N-palmitoyl cysteine attachment. C21 carries the S-diacylglycerol cysteine lipid modification.

It belongs to the bacterial solute-binding protein 3 family. In terms of assembly, the complex is composed of two ATP-binding proteins (GlnQ), two transmembrane proteins (GlnM and GlnP) and a solute-binding protein (GlnH).

It localises to the cell membrane. In terms of biological role, part of the ABC transporter complex GlnHMPQ involved in glutamine transport. In Bacillus subtilis (strain 168), this protein is ABC transporter glutamine-binding protein GlnH (glnH).